A 169-amino-acid chain; its full sequence is Signal peptidase complex subunit 1 (169 aa).

Residues 1–93 (MARGGDTGCT…QKLAEQMFQG (93 aa)) are Cytoplasmic-facing. The tract at residues 91–169 (FQGIILFSAI…RKIKRHAKNN (79 aa)) is (Microbial infection) Interaction with JEV NS2B. Residues 94–114 (IILFSAIVGFIYGYVAEQFGW) form a helical membrane-spanning segment. Residues 110–169 (EQFGWTVYIVMAGFAFSCLLTLPPWPIYRRHPLKWLPVQESSTDDKKPGERKIKRHAKNN) are (Microbial infection) Interaction with HCV NS2 and HCV E2. Residue Thr-115 is a topological domain, lumenal. The helical transmembrane segment at 116–136 (VYIVMAGFAFSCLLTLPPWPI) threads the bilayer. Topologically, residues 137–169 (YRRHPLKWLPVQESSTDDKKPGERKIKRHAKNN) are cytoplasmic. The segment at 148-169 (QESSTDDKKPGERKIKRHAKNN) is disordered.

The protein belongs to the SPCS1 family. In terms of assembly, component of the signal peptidase complex paralog A (SPC-A) composed of a catalytic subunit SEC11A and three accessory subunits SPCS1, SPCS2 and SPCS3. Component of the signal peptidase complex paralog C (SPC-C) composed of a catalytic subunit SEC11C and three accessory subunits SPCS1, SPCS2 and SPCS3. Within the complex, interacts with SPCS2 and SPCS3. The complex induces a local thinning of the ER membrane which is used to measure the length of the signal peptide (SP) h-region of protein substrates. This ensures the selectivity of the complex towards h-regions shorter than 18-20 amino acids. As to quaternary structure, (Microbial infection) Interacts with hepatitis C virus (HCV) proteins NS2 and E2. Interacts with NS2B from Japanese encephalitis virus (JEV), West Nile virus (WNV), and Zika virus (ZIKV). Post-translationally, may be phosphorylated.

The protein localises to the endoplasmic reticulum membrane. In terms of biological role, component of the signal peptidase complex (SPC) which catalyzes the cleavage of N-terminal signal sequences from nascent proteins as they are translocated into the lumen of the endoplasmic reticulum. Dispensable for SPC enzymatic activity. (Microbial infection) Required for the post-translational processing of proteins involved in virion assembly and secretion from flaviviruses such as West Nile virus (WNV), Japanese encephalitis virus (JEV), Dengue virus type 2 (DENV-2), Yellow Fever virus (YFV), Zika virus (ZIKV) and hepatitis C virus (HCV). Plays a key role in the post-translational processing of flaviviral structural proteins prM, E, and NS1. In HCV, it is involved in virion assembly where it promotes the interaction between HCV virus proteins NS2 and E2. The chain is Signal peptidase complex subunit 1 (SPCS1) from Homo sapiens (Human).